The following is a 372-amino-acid chain: DNA primase small subunit PriS (372 aa).

Catalysis depends on residues Asp95, Asp97, and Asp280.

This sequence belongs to the eukaryotic-type primase small subunit family. In terms of assembly, heterodimer of a small subunit (PriS) and a large subunit (PriL). Requires Mg(2+) as cofactor. Mn(2+) serves as cofactor.

Functionally, catalytic subunit of DNA primase, an RNA polymerase that catalyzes the synthesis of short RNA molecules used as primers for DNA polymerase during DNA replication. The small subunit contains the primase catalytic core and has DNA synthesis activity on its own. Binding to the large subunit stabilizes and modulates the activity, increasing the rate of DNA synthesis while decreasing the length of the DNA fragments, and conferring RNA synthesis capability. The DNA polymerase activity may enable DNA primase to also catalyze primer extension after primer synthesis. May also play a role in DNA repair. The protein is DNA primase small subunit PriS of Cenarchaeum symbiosum (strain A).